The chain runs to 229 residues: Protein FMP52-2, mitochondrial (229 aa).

A mitochondrion-targeting transit peptide spans 1–45 (MAAGAFILGSTGLCGYQMLRFAEKSSLFDKISTVGRKLPDFKSEK).

This sequence belongs to the FMP52 family.

The protein localises to the mitochondrion outer membrane. The sequence is that of Protein FMP52-2, mitochondrial (FMP522) from Scheffersomyces stipitis (strain ATCC 58785 / CBS 6054 / NBRC 10063 / NRRL Y-11545) (Yeast).